The primary structure comprises 800 residues: N,N'-diacetylchitobiose phosphorylase (800 aa).

Positions 333, 343, 349, 350, 490, and 492 each coordinate N-acetyl-alpha-D-glucosamine 1-phosphate. The active-site Proton donor is the aspartate 492. The N-acetyl-D-glucosamine site is built by aspartate 492, lysine 636, and glutamate 637. N-acetyl-alpha-D-glucosamine 1-phosphate-binding residues include glutamate 637, histidine 644, glutamine 690, threonine 709, and glycine 710.

The protein belongs to the glycosyl hydrolase 94 family. In terms of assembly, homodimer.

The catalysed reaction is N,N'-diacetylchitobiose + phosphate = N-acetyl-alpha-D-glucosamine 1-phosphate + N-acetyl-D-glucosamine. Its function is as follows. Catalyzes the reversible phosphorolysis of chitobiose (N,N'-diacetylchitobiose or (GlcNAc)(2)) into N-acetyl-alpha-D-glucosamine 1-phosphate (GlcNAc-1-P) and N-acetyl-D-glucosamine (GlcNAc) with inversion of the anomeric configuration. The polypeptide is N,N'-diacetylchitobiose phosphorylase (Vibrio furnissii).